An 840-amino-acid chain; its full sequence is Aconitase AMT8 (840 aa).

Substrate is bound at residue 258–260; sequence DSH. [4Fe-4S] cluster-binding residues include C450, C513, and C516. Substrate is bound by residues R536, R541, and 709–710; that span reads SR.

This sequence belongs to the aconitase/IPM isomerase family.

It functions in the pathway mycotoxin biosynthesis. Aconitase; part of the gene clusters that mediate the biosynthesis of AM-toxins, host-selective toxins (HSTs) causing Alternaria blotch on apple, a worldwide distributed disease. AM-toxins are cyclic depsipeptides containing the 3 residues 2-hydroxy-isovaleric acid (2-HIV), dehydroalanine, L-alanine which are common for all 3 AM-toxins I to III. The fourth precursor is L-alpha-amino-methoxyphenyl-valeric acid (L-Amv) for AM-toxin I, L-alpha-amino-phenyl-valeric acid (L-Apv) for AM-toxin II, and L-alpha-amino-hydroxyphenyl-valeric acid (L-Ahv) for AM-toxin III. AM-toxins have two target sites for affecting susceptible apple cells; they cause invagination of the plasma membrane and electrolyte loss and chloroplast disorganization. The non-ribosomal peptide synthetase AMT1 contains 4 catalytic modules and is responsible for activation of each residue in AM-toxin. The aldo-keto reductase AMT2 catalyzes the conversion of 2-keto-isovaleric acid (2-KIV) to 2-hydroxy-isovaleric acid (2-HIV), one of the precursor residues incorporated by AMT1 during AM-toxin biosynthesis, by reduction of its ketone to an alcohol. The cytochrome P450 monooxygenase AMT3 and the thioesterase AMT4 are also important for AM-toxin production, but their exact function within the AM-toxin biosynthesis are not known yet. Up to 21 proteins (including AMT1 to AMT4) are predicted to be involved in AM-toxin biosynthesis since their expression ishighly up-regulated in AM-toxin-producing cultures. In Alternaria alternata (Alternaria rot fungus), this protein is Aconitase AMT8.